The primary structure comprises 123 residues: D-ribose pyranase (123 aa).

The active-site Proton donor is the H20. Substrate-binding positions include D28, H90, and 112–114 (YAN).

This sequence belongs to the RbsD / FucU family. RbsD subfamily. Homodecamer.

It localises to the cytoplasm. The catalysed reaction is beta-D-ribopyranose = beta-D-ribofuranose. It functions in the pathway carbohydrate metabolism; D-ribose degradation; D-ribose 5-phosphate from beta-D-ribopyranose: step 1/2. Catalyzes the interconversion of beta-pyran and beta-furan forms of D-ribose. The protein is D-ribose pyranase of Corynebacterium glutamicum (strain ATCC 13032 / DSM 20300 / JCM 1318 / BCRC 11384 / CCUG 27702 / LMG 3730 / NBRC 12168 / NCIMB 10025 / NRRL B-2784 / 534).